The chain runs to 186 residues: Large ribosomal subunit protein eL18 (186 aa).

The protein belongs to the eukaryotic ribosomal protein eL18 family. As to quaternary structure, component of the large ribosomal subunit. Mature ribosomes consist of a small (40S) and a large (60S) subunit. The 40S subunit contains about 32 different proteins and 1 molecule of RNA (18S). The 60S subunit contains 45 different proteins and 3 molecules of RNA (25S, 5.8S and 5S).

It is found in the cytoplasm. Component of the ribosome, a large ribonucleoprotein complex responsible for the synthesis of proteins in the cell. The small ribosomal subunit (SSU) binds messenger RNAs (mRNAs) and translates the encoded message by selecting cognate aminoacyl-transfer RNA (tRNA) molecules. The large subunit (LSU) contains the ribosomal catalytic site termed the peptidyl transferase center (PTC), which catalyzes the formation of peptide bonds, thereby polymerizing the amino acids delivered by tRNAs into a polypeptide chain. The nascent polypeptides leave the ribosome through a tunnel in the LSU and interact with protein factors that function in enzymatic processing, targeting, and the membrane insertion of nascent chains at the exit of the ribosomal tunnel. The polypeptide is Large ribosomal subunit protein eL18 (Candida albicans (strain SC5314 / ATCC MYA-2876) (Yeast)).